Reading from the N-terminus, the 467-residue chain is Gamma-aminobutyric acid receptor subunit rho-3 (467 aa).

The N-terminal stretch at 1-24 is a signal peptide; sequence MVLAFQLVSFTYIWIILKPNVCAA. The Extracellular segment spans residues 25–266; the sequence is SNIKMTHQRC…LFINFVLRRH (242 aa). Arginine 111 and serine 175 together coordinate 4-aminobutanoate. A disulfide bridge links cysteine 184 with cysteine 198. Glutamate 203 is a binding site for 4-aminobutanoate. An N-linked (GlcNAc...) asparagine glycan is attached at asparagine 220. Residues 267-287 form a helical membrane-spanning segment; sequence VFFFVLQTYFPAILMVMLSWV. The Cytoplasmic portion of the chain corresponds to 288–299; the sequence is SFWIDRRAVPAR. The helical transmembrane segment at 300 to 320 threads the bilayer; the sequence is VSLGITTVLTMSTIITAVSAS. Topologically, residues 321-331 are extracellular; it reads MPQVSYLKAVD. Residues 332–352 form a helical membrane-spanning segment; the sequence is VYLWVSSLFVFLSVIEYAAVN. Positions 347–448 are interaction with SQSTM1; the sequence is EYAAVNYLTT…NNHVIDTYSR (102 aa). Over 353-446 the chain is Cytoplasmic; it reads YLTTVEERKQ…LENNHVIDTY (94 aa). A helical membrane pass occupies residues 447-467; that stretch reads SRILFPIVYILFNLFYWGVYV.

The protein belongs to the ligand-gated ion channel (TC 1.A.9) family. Gamma-aminobutyric acid receptor (TC 1.A.9.5) subfamily. GABRR3 sub-subfamily. Three rho subunits (rho-1/GBRR1, rho-2/GBRR2 and rho-3/GBRR3) coassemble either to form functional homopentamers or heteropentamers. Forms a ternary complex with SQSTM1 and PRKCZ.

The protein localises to the postsynaptic cell membrane. It localises to the cell membrane. It carries out the reaction chloride(in) = chloride(out). With respect to regulation, inhibited by TPMPA, a rho-specific antagonist, when forming a homopentamer. Functionally, rho subunit of the pentameric ligand-gated chloride channels responsible for mediating the effects of gamma-aminobutyric acid (GABA), the major inhibitory neurotransmitter in the brain. Rho-containing GABA-gated chloride channels are a subclass of GABA(A) receptors (GABAARs) entirely composed of rho subunits, where GABA molecules bind at the rho intersubunit interfaces. When activated by GABA, rho-GABAARs selectively allow the flow of chloride anions across the cell membrane down their electrochemical gradient. The protein is Gamma-aminobutyric acid receptor subunit rho-3 of Homo sapiens (Human).